Consider the following 132-residue polypeptide: Small ribosomal subunit protein uS8 (132 aa).

It belongs to the universal ribosomal protein uS8 family. In terms of assembly, part of the 30S ribosomal subunit. Contacts proteins S5 and S12.

Its function is as follows. One of the primary rRNA binding proteins, it binds directly to 16S rRNA central domain where it helps coordinate assembly of the platform of the 30S subunit. The sequence is that of Small ribosomal subunit protein uS8 from Rickettsia bellii (strain OSU 85-389).